The chain runs to 728 residues: Lutropin-choriogonadotropic hormone receptor (728 aa).

Positions 1-19 are cleaved as a signal peptide; it reads MLPALLPLLLPALLPGAGG. Topologically, residues 20–389 are extracellular; sequence GRCPQRCACT…DILGYSFLRV (370 aa). 6 LRR repeats span residues 92–116, 117–142, 144–166, 168–191, 193–215, and 216–239; these read LPAL…AFRN, LPRL…IFSS, AHFI…AFQG, SNES…AFNG, KLNQ…ALRG, and ATGP…GLEA. The helical transmembrane segment at 390–410 threads the bilayer; the sequence is LIWFINILALAGNFIVLLVLI. Topologically, residues 411–420 are cytoplasmic; sequence TSHYKLTVPR. A helical transmembrane segment spans residues 421 to 441; the sequence is FLMCNLSFADFCMGLYLLLIA. The Extracellular portion of the chain corresponds to 442-466; that stretch reads SVDAQTSGQYYNHAIDWQTGSGCST. C464 and C539 form a disulfide bridge. The chain crosses the membrane as a helical span at residues 467–487; it reads AGFFTVFASELSVYTLTVITI. The Cytoplasmic portion of the chain corresponds to 488-507; sequence ERWHTITYAMQLDRKLRLRH. Residues 508–528 form a helical membrane-spanning segment; the sequence is AVPIMLGGWVFSILIAVLPLL. Residues 529-551 are Extracellular-facing; it reads GVSSYMKVSICLPMDIETGLSQA. A helical transmembrane segment spans residues 552 to 572; the sequence is YILLILMLNVIAFLVICACYI. The Cytoplasmic segment spans residues 573-595; the sequence is KIYVAVQNPELVAANKDTKIAKR. The chain crosses the membrane as a helical span at residues 596-616; the sequence is MAILIFTDFTCMAPISFFAIS. Over 617 to 630 the chain is Extracellular; sequence AAIKVPLITVTNSK. The helical transmembrane segment at 631–651 threads the bilayer; the sequence is ILLVLFYPVNSCANPFLYAIF. Residues 652–728 lie on the Cytoplasmic side of the membrane; it reads TKAFQRDFFL…STKKSQPECQ (77 aa).

It belongs to the G-protein coupled receptor 1 family. FSH/LSH/TSH subfamily. As to expression, expressed in ovarian follicle granulosa cells. Expressed in ovarian follicle theca cells.

It localises to the cell membrane. Functionally, receptor for lutropin-choriogonadotropic hormone. The activity of this receptor is mediated by G proteins which activate adenylate cyclase. This chain is Lutropin-choriogonadotropic hormone receptor, found in Gallus gallus (Chicken).